Here is a 66-residue protein sequence, read N- to C-terminus: Kappa-flavitoxin (66 aa).

Intrachain disulfides connect cysteine 3/cysteine 21, cysteine 14/cysteine 42, cysteine 27/cysteine 31, cysteine 46/cysteine 58, and cysteine 59/cysteine 64.

Belongs to the three-finger toxin family. Long-chain subfamily. Kappa-neurotoxin sub-subfamily. In terms of assembly, homo- and heterodimer; non-covalently linked. Expressed by the venom gland.

The protein localises to the secreted. Its function is as follows. Postsynaptic neurotoxin that binds and inhibits neuronal nicotinic acetylcholine receptors (nAChR) with high affinity (IC(50)&lt;100 nM). Is a selective, and slowly reversible antagonist of alpha-3/CHRNA3-containing and some alpha-4/CHRNA4-containing AChRs. The sequence is that of Kappa-flavitoxin from Bungarus flaviceps flaviceps (Red-headed krait).